The chain runs to 242 residues: Ribosomal RNA small subunit methyltransferase G (242 aa).

S-adenosyl-L-methionine-binding positions include glycine 78, phenylalanine 83, alanine 129–glutamate 130, and arginine 148. Positions threonine 221–aspartate 242 are disordered.

This sequence belongs to the methyltransferase superfamily. RNA methyltransferase RsmG family.

Its subcellular location is the cytoplasm. Functionally, specifically methylates the N7 position of a guanine in 16S rRNA. The polypeptide is Ribosomal RNA small subunit methyltransferase G (Oenococcus oeni (strain ATCC BAA-331 / PSU-1)).